We begin with the raw amino-acid sequence, 223 residues long: Putative germin-like protein 2-2 (223 aa).

A signal peptide spans 1–28 (MAAVGACFLQQLAVVALLALWCSHGAIA). Residues cysteine 38 and cysteine 53 are joined by a disulfide bond. In terms of domain architecture, Cupin type-1 spans 67–217 (SGLHMAGNTT…AFQVDKNIID (151 aa)). N-linked (GlcNAc...) asparagine glycosylation is found at asparagine 74 and asparagine 82. Histidine 115, histidine 117, glutamate 122, and histidine 163 together coordinate Mn(2+). N-linked (GlcNAc...) asparagine glycosylation occurs at asparagine 168.

The protein belongs to the germin family. Oligomer (believed to be a pentamer but probably hexamer).

Its subcellular location is the secreted. The protein resides in the extracellular space. It is found in the apoplast. Functionally, may play a role in plant defense. Probably has no oxalate oxidase activity even if the active site is conserved. This chain is Putative germin-like protein 2-2, found in Oryza sativa subsp. japonica (Rice).